The primary structure comprises 1627 residues: Type III effector DspE (1627 aa).

Composition is skewed to polar residues over residues 22-44 and 59-74; these read AKTSLSQGNSTSASQKGAQSLIQ and GNGSSVRSQDSRSTTL. 2 disordered regions span residues 22–102 and 436–464; these read AKTS…GPIQ and QTQALATDRQGQKHVAPLGQNGLSPTPGW. Short sequence motifs (wxxxE) lie at residues 464-468, 514-520, and 660-667; these read WNLSD, WEASSVE, and WQNAANHD.

It belongs to the AvrE family.

It localises to the secreted. Its subcellular location is the host cell. Major virulence factor that may function as a water- and solute-permeable channel dedicated to creating osmotic/water potential perturbation and a water- and nutrient-rich apoplast in which bacteria multiply within the infected plant tissues. Functionally, required for plant cell death in N.benthamiana leaves and leaf cell death in S.tuberosum. Essential for pathogenicity. Does not suppress callose formation. This chain is Type III effector DspE, found in Pectobacterium carotovorum (Erwinia carotovora).